A 250-amino-acid chain; its full sequence is ATP synthase subunit a (250 aa).

The next 6 membrane-spanning stretches (helical) occupy residues 26 to 46 (FTNASLFMVATVGAAAGFLYL), 84 to 104 (FFPMVFSLFMFILTANLLGMV), 114 to 134 (IIVTFALAVFVIGTVILYGFY), 143 to 163 (LFVPHGVPGALLPLVVAIEII), 193 to 213 (FVASLSAFGALGIGGAILPLI), and 216 to 236 (VALTGLEFLVAFLQAYVFAVL).

The protein belongs to the ATPase A chain family. F-type ATPases have 2 components, CF(1) - the catalytic core - and CF(0) - the membrane proton channel. CF(1) has five subunits: alpha(3), beta(3), gamma(1), delta(1), epsilon(1). CF(0) has three main subunits: a(1), b(2) and c(9-12). The alpha and beta chains form an alternating ring which encloses part of the gamma chain. CF(1) is attached to CF(0) by a central stalk formed by the gamma and epsilon chains, while a peripheral stalk is formed by the delta and b chains.

It localises to the cell inner membrane. Functionally, key component of the proton channel; it plays a direct role in the translocation of protons across the membrane. The sequence is that of ATP synthase subunit a from Sinorhizobium medicae (strain WSM419) (Ensifer medicae).